The following is a 465-amino-acid chain: D(1C) dopamine receptor (465 aa).

At 1–30 (MENFSIFNVTVNVWHADLDVGNSDLSLRAL) the chain is on the extracellular side. Residues N3 and N8 are each glycosylated (N-linked (GlcNAc...) asparagine). The chain crosses the membrane as a helical span at residues 31-54 (TGLLLSLLILSTLLGNTLVCLAVI). Residues 55–65 (KFRHLRSKVTN) lie on the Cytoplasmic side of the membrane. A helical membrane pass occupies residues 66–92 (FFVISLAVSDLFVALLVMPWKAVTEVA). Residues 93 to 101 (GFWVFGDFC) are Extracellular-facing. Cysteines 101 and 187 form a disulfide. Residues 102 to 124 (DTWVAFDIMCSTASILNLCIISL) traverse the membrane as a helical segment. Over 125 to 143 (DRYWAIASPFRYERKMTQR) the chain is Cytoplasmic. The chain crosses the membrane as a helical span at residues 144 to 168 (VAFIMIGVAWTLSILISFIPVQLSW). Residues 169-193 (HKSHEADEELNGVNHTENCDSSLNR) are Extracellular-facing. A helical transmembrane segment spans residues 194-219 (TYAISSSLISFYIPVVIMIGTYTRIY). At 220–264 (RIAQTQIRRISSLERAVEHAQRCSSRLSNENSLKTSFRKETKVLK) the chain is on the cytoplasmic side. Residues 265-291 (TLSIIMGVFVFCWLPFFVLNCMIPFCH) form a helical membrane-spanning segment. Topologically, residues 292 to 309 (MNLPGQNEPEPPCVSETT) are extracellular. The chain crosses the membrane as a helical span at residues 310-334 (FNIFVWFGWANSSLNPVIYAFNADF). The Cytoplasmic portion of the chain corresponds to 335 to 465 (RKAFTTILGC…EDRHYTTKLY (131 aa)). C344 is lipidated: S-palmitoyl cysteine.

This sequence belongs to the G-protein coupled receptor 1 family. Brain and kidney.

The protein resides in the cell membrane. It is found in the cell projection. It localises to the cilium membrane. Functionally, this is one of the five types (D1 to D5) of receptors for dopamine. The activity of this receptor is mediated by G proteins which activate adenylyl cyclase. This chain is D(1C) dopamine receptor (drd1c), found in Xenopus laevis (African clawed frog).